A 321-amino-acid polypeptide reads, in one-letter code: Lipoyl synthase (321 aa).

[4Fe-4S] cluster-binding residues include C68, C73, C79, C94, C98, C101, and S308. Residues 80-297 (FNHGTATFMI…KALADELGFT (218 aa)) enclose the Radical SAM core domain.

Belongs to the radical SAM superfamily. Lipoyl synthase family. Requires [4Fe-4S] cluster as cofactor.

The protein localises to the cytoplasm. It carries out the reaction [[Fe-S] cluster scaffold protein carrying a second [4Fe-4S](2+) cluster] + N(6)-octanoyl-L-lysyl-[protein] + 2 oxidized [2Fe-2S]-[ferredoxin] + 2 S-adenosyl-L-methionine + 4 H(+) = [[Fe-S] cluster scaffold protein] + N(6)-[(R)-dihydrolipoyl]-L-lysyl-[protein] + 4 Fe(3+) + 2 hydrogen sulfide + 2 5'-deoxyadenosine + 2 L-methionine + 2 reduced [2Fe-2S]-[ferredoxin]. The protein operates within protein modification; protein lipoylation via endogenous pathway; protein N(6)-(lipoyl)lysine from octanoyl-[acyl-carrier-protein]: step 2/2. Its function is as follows. Catalyzes the radical-mediated insertion of two sulfur atoms into the C-6 and C-8 positions of the octanoyl moiety bound to the lipoyl domains of lipoate-dependent enzymes, thereby converting the octanoylated domains into lipoylated derivatives. This is Lipoyl synthase from Shewanella baltica (strain OS185).